A 389-amino-acid polypeptide reads, in one-letter code: Major outer membrane porin (389 aa).

Residues 1-23 form the signal peptide; that stretch reads MKKLLKSALLSAAFAGSVGSLQA.

This sequence belongs to the chlamydial porin (CP) (TC 1.B.2) family. In terms of assembly, part of a disulfide cross-linked outer membrane complex (COMC) composed of the major outer membrane porin (MOMP), the small cysteine-rich protein (OmcA) and the large cysteine-rich periplasmic protein (OmcB).

The protein localises to the cell outer membrane. Functionally, in elementary bodies (EBs, the infectious stage, which is able to survive outside the host cell) provides the structural integrity of the outer envelope through disulfide cross-links with the small cysteine-rich protein and the large cysteine-rich periplasmic protein. It has been described in publications as the Sarkosyl-insoluble COMC (Chlamydia outer membrane complex), and serves as the functional equivalent of peptidoglycan. In terms of biological role, permits diffusion of specific solutes through the outer membrane. In Chlamydia pneumoniae (Chlamydophila pneumoniae), this protein is Major outer membrane porin (ompA).